The chain runs to 396 residues: Elongation factor Tu (396 aa).

The region spanning 10 to 205 (KPHVNIGTIG…ACDESIPDPE (196 aa)) is the tr-type G domain. Residues 19–26 (GHVDHGKT) form a G1 region. Position 19 to 26 (19 to 26 (GHVDHGKT)) interacts with GTP. Position 26 (Thr-26) interacts with Mg(2+). The tract at residues 62-66 (GITIN) is G2. The tract at residues 83–86 (DAPG) is G3. GTP contacts are provided by residues 83-87 (DAPGH) and 138-141 (NKCD). The segment at 138–141 (NKCD) is G4. A G5 region spans residues 175–177 (SAL).

This sequence belongs to the TRAFAC class translation factor GTPase superfamily. Classic translation factor GTPase family. EF-Tu/EF-1A subfamily. In terms of assembly, monomer.

Its subcellular location is the cytoplasm. The enzyme catalyses GTP + H2O = GDP + phosphate + H(+). In terms of biological role, GTP hydrolase that promotes the GTP-dependent binding of aminoacyl-tRNA to the A-site of ribosomes during protein biosynthesis. The sequence is that of Elongation factor Tu from Corynebacterium jeikeium (strain K411).